A 304-amino-acid chain; its full sequence is Acetylglutamate kinase (304 aa).

Substrate contacts are provided by residues 77–78, R99, and N193; that span reads GG.

Belongs to the acetylglutamate kinase family. ArgB subfamily.

It localises to the cytoplasm. It carries out the reaction N-acetyl-L-glutamate + ATP = N-acetyl-L-glutamyl 5-phosphate + ADP. The protein operates within amino-acid biosynthesis; L-arginine biosynthesis; N(2)-acetyl-L-ornithine from L-glutamate: step 2/4. Catalyzes the ATP-dependent phosphorylation of N-acetyl-L-glutamate. This Pelodictyon phaeoclathratiforme (strain DSM 5477 / BU-1) protein is Acetylglutamate kinase.